The chain runs to 650 residues: Aminopeptidase B (650 aa).

Residue 298-302 (GGMEN) coordinates substrate. His325 is a Zn(2+) binding site. Glu326 functions as the Proton acceptor in the catalytic mechanism. Zn(2+) is bound by residues His329 and Glu348. The residue at position 446 (Lys446) is an N6-acetyllysine.

This sequence belongs to the peptidase M1 family. Monomer. Zn(2+) serves as cofactor.

The protein localises to the secreted. It catalyses the reaction Release of N-terminal Arg and Lys from oligopeptides when P1' is not Pro. Also acts on arylamides of Arg and Lys.. Its function is as follows. Exopeptidase which selectively removes arginine and/or lysine residues from the N-terminus of several peptide substrates including Arg(0)-Leu-enkephalin, Arg(0)-Met-enkephalin and Arg(-1)-Lys(0)-somatostatin-14. Can hydrolyze leukotriene A4 (LTA-4) into leukotriene B4 (LTB-4). The protein is Aminopeptidase B (Rnpep) of Mus musculus (Mouse).